The chain runs to 349 residues: Glycerol-3-phosphate dehydrogenase [NAD(+)], cytoplasmic (349 aa).

Position 10–15 (10–15 (GSGNWG)) interacts with NAD(+). Position 120 (lysine 120) interacts with substrate. Alanine 153 contributes to the NAD(+) binding site. Catalysis depends on lysine 204, which acts as the Proton acceptor. Arginine 269 provides a ligand contact to NAD(+). 269–270 (RN) contributes to the substrate binding site. An N6-succinyllysine modification is found at lysine 289. Residues lysine 296 and glutamine 298 each coordinate NAD(+). Tyrosine 326 is modified (phosphotyrosine).

Belongs to the NAD-dependent glycerol-3-phosphate dehydrogenase family. Homodimer.

It localises to the cytoplasm. It catalyses the reaction sn-glycerol 3-phosphate + NAD(+) = dihydroxyacetone phosphate + NADH + H(+). In terms of biological role, has glycerol-3-phosphate dehydrogenase activity. The polypeptide is Glycerol-3-phosphate dehydrogenase [NAD(+)], cytoplasmic (GPD1) (Bos taurus (Bovine)).